A 310-amino-acid chain; its full sequence is Lipoyl synthase (310 aa).

[4Fe-4S] cluster-binding residues include C54, C59, C65, C80, C84, C87, and S295. One can recognise a Radical SAM core domain in the interval 66 to 284 (FASGTATFLI…LFGEDNLGFM (219 aa)).

The protein belongs to the radical SAM superfamily. Lipoyl synthase family. Requires [4Fe-4S] cluster as cofactor.

It is found in the cytoplasm. The catalysed reaction is [[Fe-S] cluster scaffold protein carrying a second [4Fe-4S](2+) cluster] + N(6)-octanoyl-L-lysyl-[protein] + 2 oxidized [2Fe-2S]-[ferredoxin] + 2 S-adenosyl-L-methionine + 4 H(+) = [[Fe-S] cluster scaffold protein] + N(6)-[(R)-dihydrolipoyl]-L-lysyl-[protein] + 4 Fe(3+) + 2 hydrogen sulfide + 2 5'-deoxyadenosine + 2 L-methionine + 2 reduced [2Fe-2S]-[ferredoxin]. Its pathway is protein modification; protein lipoylation via endogenous pathway; protein N(6)-(lipoyl)lysine from octanoyl-[acyl-carrier-protein]: step 2/2. Catalyzes the radical-mediated insertion of two sulfur atoms into the C-6 and C-8 positions of the octanoyl moiety bound to the lipoyl domains of lipoate-dependent enzymes, thereby converting the octanoylated domains into lipoylated derivatives. The protein is Lipoyl synthase of Prochlorococcus marinus (strain MIT 9215).